Here is a 219-residue protein sequence, read N- to C-terminus: Probable transaldolase (219 aa).

Catalysis depends on K83, which acts as the Schiff-base intermediate with substrate.

It belongs to the transaldolase family. Type 3B subfamily.

It is found in the cytoplasm. The catalysed reaction is D-sedoheptulose 7-phosphate + D-glyceraldehyde 3-phosphate = D-erythrose 4-phosphate + beta-D-fructose 6-phosphate. Its pathway is carbohydrate degradation; pentose phosphate pathway; D-glyceraldehyde 3-phosphate and beta-D-fructose 6-phosphate from D-ribose 5-phosphate and D-xylulose 5-phosphate (non-oxidative stage): step 2/3. In terms of biological role, transaldolase is important for the balance of metabolites in the pentose-phosphate pathway. The chain is Probable transaldolase from Cereibacter sphaeroides (strain ATCC 17029 / ATH 2.4.9) (Rhodobacter sphaeroides).